Reading from the N-terminus, the 152-residue chain is Large ribosomal subunit protein uL30 (152 aa).

It belongs to the universal ribosomal protein uL30 family. As to quaternary structure, part of the 50S ribosomal subunit.

The polypeptide is Large ribosomal subunit protein uL30 (Methanosphaera stadtmanae (strain ATCC 43021 / DSM 3091 / JCM 11832 / MCB-3)).